The following is a 496-amino-acid chain: Galactan beta-1,4-galactosyltransferase GALS1 (496 aa).

The chain crosses the membrane as a helical span at residues 22-42 (IIATLLALSLVMIVWNLPPYY). Residues 232-464 (DYLYCGSSLY…AKKKVTLYNK (233 aa)) enclose the GT92 domain.

Belongs to the glycosyltransferase 92 family. Expressed in root vasculature, mature leaves, trichomes, flowers, siliques and seeds.

The protein resides in the golgi apparatus membrane. Involved in the biosynthesis of beta-1,4-galactan. Can transfer galactose residues from UDP-galactose to beta-1,4-galactopentaose in vitro. Forms specifically beta-1,4-galactosyl linkages and can add successive beta-1,4-galactosyl residues to the acceptor. Beta-1,4-galactans are abundant polysaccharides in plant cell walls and are found as side-chain of rhamnogalacturonan I, which is a major component of pectin. The chain is Galactan beta-1,4-galactosyltransferase GALS1 from Arabidopsis thaliana (Mouse-ear cress).